The chain runs to 245 residues: Type III pantothenate kinase (245 aa).

6–13 lines the ATP pocket; sequence DQGNTILK. Residues Y86 and 93–96 contribute to the substrate site; that span reads GTDR. The active-site Proton acceptor is the D95. D116 contributes to the K(+) binding site. T119 contributes to the ATP binding site. T171 is a binding site for substrate.

Belongs to the type III pantothenate kinase family. Homodimer. NH4(+) is required as a cofactor. K(+) serves as cofactor.

It is found in the cytoplasm. It catalyses the reaction (R)-pantothenate + ATP = (R)-4'-phosphopantothenate + ADP + H(+). It participates in cofactor biosynthesis; coenzyme A biosynthesis; CoA from (R)-pantothenate: step 1/5. Functionally, catalyzes the phosphorylation of pantothenate (Pan), the first step in CoA biosynthesis. This Azobacteroides pseudotrichonymphae genomovar. CFP2 protein is Type III pantothenate kinase.